Reading from the N-terminus, the 379-residue chain is Reducing end xylose-releasing exo-oligoxylanase (379 aa).

Catalysis depends on Glu-66, which acts as the Proton donor. The active-site Proton acceptor is the Asp-259.

The protein belongs to the glycosyl hydrolase 8 (cellulase D) family.

The enzyme catalyses Hydrolysis of (1-&gt;4)-beta-D-xylose residues from the reducing end of oligosaccharides.. Functionally, hydrolyzes xylooligosaccharides with a degree of polymerization of greater than or equal to 3, releasing xylose from the reducing end. Has low activity on birchwood xylan, oat spelt xylan and arabinoxylan. The sequence is that of Reducing end xylose-releasing exo-oligoxylanase from Bifidobacterium adolescentis (strain ATCC 15703 / DSM 20083 / NCTC 11814 / E194a).